A 358-amino-acid chain; its full sequence is 3-isopropylmalate dehydrogenase (358 aa).

77 to 90 (GPKWTHLPPDQQPE) lines the NAD(+) pocket. Substrate-binding residues include R98, R108, R137, and D226. Mg(2+)-binding residues include D226, D250, and D254. 284-296 (GSAPDIAGKGIAN) is an NAD(+) binding site.

It belongs to the isocitrate and isopropylmalate dehydrogenases family. LeuB type 1 subfamily. In terms of assembly, homodimer. The cofactor is Mg(2+). Mn(2+) serves as cofactor.

It localises to the cytoplasm. It carries out the reaction (2R,3S)-3-isopropylmalate + NAD(+) = 4-methyl-2-oxopentanoate + CO2 + NADH. The protein operates within amino-acid biosynthesis; L-leucine biosynthesis; L-leucine from 3-methyl-2-oxobutanoate: step 3/4. Functionally, catalyzes the oxidation of 3-carboxy-2-hydroxy-4-methylpentanoate (3-isopropylmalate) to 3-carboxy-4-methyl-2-oxopentanoate. The product decarboxylates to 4-methyl-2 oxopentanoate. This chain is 3-isopropylmalate dehydrogenase, found in Mannheimia succiniciproducens (strain KCTC 0769BP / MBEL55E).